The following is a 218-amino-acid chain: MPMTLGYWDIRGLAHAIRLLLEYTDSSYEEKRYTMGDAPDYDRSQWLSEKFKLGLDFPNLPYLIDGSHKITQSNAILRYIARKHNLCGETEEEKIRVDILENQAMDVSNQLARVCYSPDFENLKAEYLEQLPGMMELFSQFLGKQTWFVGEKITFVDFLAYDILDLHLIFEPKCLDAFPNLKDFVARFEGLKKISVYMKTSRFLRTPLYTRVATWGNK.

Residues 1–88 enclose the GST N-terminal domain; that stretch reads MPMTLGYWDI…YIARKHNLCG (88 aa). Glutathione contacts are provided by residues 7–8, 46–50, 59–60, and 72–73; these read YW, WLSEK, NL, and QS. Residues 90 to 208 enclose the GST C-terminal domain; that stretch reads TEEEKIRVDI…KTSRFLRTPL (119 aa). A substrate-binding site is contributed by Tyr-116.

The protein belongs to the GST superfamily. Mu family. In terms of assembly, homodimer.

The protein resides in the cytoplasm. It catalyses the reaction RX + glutathione = an S-substituted glutathione + a halide anion + H(+). It carries out the reaction 1-chloro-2,4-dinitrobenzene + glutathione = 2,4-dinitrophenyl-S-glutathione + chloride + H(+). The catalysed reaction is (13S,14S)-epoxy-(4Z,7Z,9E,11E,16Z,19Z)-docosahexaenoate + glutathione = (13R)-S-glutathionyl-(14S)-hydroxy-(4Z,7Z,9E,11E,16Z,19Z)-docosahexaenoate. The enzyme catalyses leukotriene C4 = leukotriene A4 + glutathione. Conjugation of reduced glutathione to a wide number of exogenous and endogenous hydrophobic electrophiles. Catalyzes the conjugation of leukotriene A4 with reduced glutathione (GSH) to form leukotriene C4. Can also catalyze the transfer of a glutathionyl group from glutathione (GSH) to 13(S),14(S)-epoxy-docosahexaenoic acid to form maresin conjugate in tissue regeneration 1 (MCTR1), a bioactive lipid mediator that possess potent anti-inflammatory and proresolving actions. This chain is Glutathione S-transferase Mu 4 (Gstm4), found in Rattus norvegicus (Rat).